The sequence spans 180 residues: Putative manganese efflux pump MntP (180 aa).

6 helical membrane passes run 1 to 21 (MLSV…ISIT), 34 to 54 (ILWY…IGYV), 63 to 83 (ISTY…LNMI), 103 to 123 (VTLL…TFAI), 129 to 149 (VIPC…GIFI), and 160 to 180 (KFQI…LLGF).

Belongs to the MntP (TC 9.B.29) family.

Its subcellular location is the cell membrane. In terms of biological role, probably functions as a manganese efflux pump. This is Putative manganese efflux pump MntP from Methanosphaera stadtmanae (strain ATCC 43021 / DSM 3091 / JCM 11832 / MCB-3).